The following is a 243-amino-acid chain: Endochitinase (243 aa).

Cystine bridges form between C23/C85, C97/C105, and C223/C236. E67 functions as the Proton donor in the catalytic mechanism.

The protein resides in the vacuole. The catalysed reaction is Random endo-hydrolysis of N-acetyl-beta-D-glucosaminide (1-&gt;4)-beta-linkages in chitin and chitodextrins.. Functionally, defense against chitin-containing fungal pathogens. Shows activity on chitin, tetra-N-acetylglucosamine and chitosan. In Carica papaya (Papaya), this protein is Endochitinase.